The primary structure comprises 855 residues: Valine--tRNA ligase (855 aa).

A 'HIGH' region motif is present at residues 44–54; that stretch reads PNVTGVLHIGH. The 'KMSKS' region signature appears at 524–528; that stretch reads KMSKT. Lys527 contacts ATP. A coiled-coil region spans residues 797–827; that stretch reads KVEEDPARKQKEREQLEKNIANSKRQLGDEV.

This sequence belongs to the class-I aminoacyl-tRNA synthetase family. ValS type 1 subfamily. As to quaternary structure, monomer.

It is found in the cytoplasm. The catalysed reaction is tRNA(Val) + L-valine + ATP = L-valyl-tRNA(Val) + AMP + diphosphate. Its function is as follows. Catalyzes the attachment of valine to tRNA(Val). As ValRS can inadvertently accommodate and process structurally similar amino acids such as threonine, to avoid such errors, it has a 'posttransfer' editing activity that hydrolyzes mischarged Thr-tRNA(Val) in a tRNA-dependent manner. The polypeptide is Valine--tRNA ligase (Solibacter usitatus (strain Ellin6076)).